A 325-amino-acid chain; its full sequence is UPF0285 protein Mbar_A0208 (325 aa).

This sequence belongs to the UPF0285 family.

This Methanosarcina barkeri (strain Fusaro / DSM 804) protein is UPF0285 protein Mbar_A0208.